Reading from the N-terminus, the 333-residue chain is Tubulin alpha chain (333 aa).

Positions 48, 52, 53, 88, 115, and 137 each coordinate GTP.

This sequence belongs to the tubulin family. In terms of assembly, dimer of alpha and beta chains. A typical microtubule is a hollow water-filled tube with an outer diameter of 25 nm and an inner diameter of 15 nM. Alpha-beta heterodimers associate head-to-tail to form protofilaments running lengthwise along the microtubule wall with the beta-tubulin subunit facing the microtubule plus end conferring a structural polarity. Microtubules usually have 13 protofilaments but different protofilament numbers can be found in some organisms and specialized cells. The cofactor is Mg(2+). Post-translationally, undergoes a tyrosination/detyrosination cycle, the cyclic removal and re-addition of a C-terminal tyrosine residue by the enzymes tubulin tyrosine carboxypeptidase (TTCP) and tubulin tyrosine ligase (TTL), respectively.

It localises to the cytoplasm. It is found in the cytoskeleton. It carries out the reaction GTP + H2O = GDP + phosphate + H(+). Its function is as follows. Tubulin is the major constituent of microtubules, a cylinder consisting of laterally associated linear protofilaments composed of alpha- and beta-tubulin heterodimers. Microtubules grow by the addition of GTP-tubulin dimers to the microtubule end, where a stabilizing cap forms. Below the cap, tubulin dimers are in GDP-bound state, owing to GTPase activity of alpha-tubulin. In Dictyostelium purpureum (Slime mold), this protein is Tubulin alpha chain (tuba).